The primary structure comprises 91 residues: Small ribosomal subunit protein uS19 (91 aa).

The protein belongs to the universal ribosomal protein uS19 family.

Its function is as follows. Protein S19 forms a complex with S13 that binds strongly to the 16S ribosomal RNA. The protein is Small ribosomal subunit protein uS19 of Delftia acidovorans (strain DSM 14801 / SPH-1).